We begin with the raw amino-acid sequence, 356 residues long: S-adenosylmethionine:tRNA ribosyltransferase-isomerase (356 aa).

Belongs to the QueA family. Monomer.

The protein localises to the cytoplasm. The catalysed reaction is 7-aminomethyl-7-carbaguanosine(34) in tRNA + S-adenosyl-L-methionine = epoxyqueuosine(34) in tRNA + adenine + L-methionine + 2 H(+). It functions in the pathway tRNA modification; tRNA-queuosine biosynthesis. Its function is as follows. Transfers and isomerizes the ribose moiety from AdoMet to the 7-aminomethyl group of 7-deazaguanine (preQ1-tRNA) to give epoxyqueuosine (oQ-tRNA). The sequence is that of S-adenosylmethionine:tRNA ribosyltransferase-isomerase from Shigella dysenteriae serotype 1 (strain Sd197).